Reading from the N-terminus, the 232-residue chain is Probable caffeoyl-CoA O-methyltransferase At4g26220 (232 aa).

Residue lysine 7 coordinates substrate. Residues threonine 49, glutamate 71, 73-74, serine 79, aspartate 97, and alanine 126 contribute to the S-adenosyl-L-methionine site; that span reads GV. Residue aspartate 149 participates in substrate binding. Residue aspartate 149 coordinates a divalent metal cation. Aspartate 151 is an S-adenosyl-L-methionine binding site. A divalent metal cation contacts are provided by aspartate 175 and asparagine 176.

Belongs to the class I-like SAM-binding methyltransferase superfamily. Cation-dependent O-methyltransferase family. CCoAMT subfamily. The cofactor is a divalent metal cation.

It carries out the reaction (E)-caffeoyl-CoA + S-adenosyl-L-methionine = (E)-feruloyl-CoA + S-adenosyl-L-homocysteine + H(+). Its pathway is aromatic compound metabolism; phenylpropanoid biosynthesis. Methylates caffeoyl-CoA to feruloyl-CoA and 5-hydroxyferuloyl-CoA to sinapoyl-CoA. Plays a role in the synthesis of feruloylated polysaccharides. Involved in the reinforcement of the plant cell wall. Also involved in the responding to wounding or pathogen challenge by the increased formation of cell wall-bound ferulic acid polymers. In Arabidopsis thaliana (Mouse-ear cress), this protein is Probable caffeoyl-CoA O-methyltransferase At4g26220.